The sequence spans 170 residues: Protein ECM34 (170 aa).

An N-linked (GlcNAc...) asparagine glycan is attached at asparagine 45. A run of 2 helical transmembrane segments spans residues 51–71 and 98–118; these read IWLL…GIGG and TIVI…FKMY.

This sequence belongs to the DUP/COS family.

The protein localises to the membrane. Functionally, may be involved in cell wall organization and biogenesis. This Saccharomyces cerevisiae (strain ATCC 204508 / S288c) (Baker's yeast) protein is Protein ECM34 (ECM34).